The chain runs to 362 residues: D-alanine--D-alanine ligase (362 aa).

Positions 141–346 (KNIFAEAGLN…YPELIEELIR (206 aa)) constitute an ATP-grasp domain. 174-229 (EEALGYPCFVKPANLGSSVGINKCKDREELEKAFEEAFQFDRKIIVEENIIGREVE) serves as a coordination point for ATP. 3 residues coordinate Mg(2+): aspartate 300, glutamate 313, and asparagine 315.

This sequence belongs to the D-alanine--D-alanine ligase family. The cofactor is Mg(2+). Mn(2+) is required as a cofactor.

Its subcellular location is the cytoplasm. The enzyme catalyses 2 D-alanine + ATP = D-alanyl-D-alanine + ADP + phosphate + H(+). It functions in the pathway cell wall biogenesis; peptidoglycan biosynthesis. Its function is as follows. Cell wall formation. This is D-alanine--D-alanine ligase from Bacillus cytotoxicus (strain DSM 22905 / CIP 110041 / 391-98 / NVH 391-98).